Reading from the N-terminus, the 173-residue chain is MSLKLAEKEQVVATLQTRLTRAQATVVAEYRGLTVAQMTVFRAEAQKQSVHVQVVKNTLLKRALAGTPFAVMDHLLKGPLVFAAAEDPVALAKLFTDHAKRLEKLVIIGGVLSGKQIDAAAIAQLSKMPSREELLAKLLGTMQAPVAGFVRTLNEVPSRFVRTLAAVRDQRAA.

It belongs to the universal ribosomal protein uL10 family. As to quaternary structure, part of the ribosomal stalk of the 50S ribosomal subunit. The N-terminus interacts with L11 and the large rRNA to form the base of the stalk. The C-terminus forms an elongated spine to which L12 dimers bind in a sequential fashion forming a multimeric L10(L12)X complex.

Forms part of the ribosomal stalk, playing a central role in the interaction of the ribosome with GTP-bound translation factors. The polypeptide is Large ribosomal subunit protein uL10 (Acidithiobacillus ferrooxidans (strain ATCC 23270 / DSM 14882 / CIP 104768 / NCIMB 8455) (Ferrobacillus ferrooxidans (strain ATCC 23270))).